Consider the following 268-residue polypeptide: Small ribosomal subunit protein uS2 (268 aa).

The interval 233–268 (SVREEEFAEAAAEGEEKPARRAPAKKAAKKGDDAQA) is disordered.

The protein belongs to the universal ribosomal protein uS2 family.

The polypeptide is Small ribosomal subunit protein uS2 (Stenotrophomonas maltophilia (strain K279a)).